We begin with the raw amino-acid sequence, 222 residues long: UPF0688 protein C1orf174 homolog (222 aa).

2 disordered regions span residues 23 to 57 (STSLASAGDIASSTSAKTTCLASSSHKATDRRTSK) and 98 to 158 (EDGA…EPVP). The span at 33 to 48 (ASSTSAKTTCLASSSH) shows a compositional bias: polar residues. Over residues 121–131 (VSEEPSVKAEE) the composition is skewed to basic and acidic residues. A Phosphoserine modification is found at serine 172.

This sequence belongs to the UPF0688 family.

The protein localises to the nucleus. The protein is UPF0688 protein C1orf174 homolog of Rattus norvegicus (Rat).